The following is a 372-amino-acid chain: tRNA-specific 2-thiouridylase MnmA (372 aa).

Residues 6 to 13 (AMSGGVDS) and leucine 32 contribute to the ATP site. The active-site Nucleophile is the cysteine 101. Cysteine 101 and cysteine 193 are oxidised to a cystine. Residue glycine 125 participates in ATP binding. The tract at residues 143–145 (KDQ) is interaction with tRNA. Cysteine 193 acts as the Cysteine persulfide intermediate in catalysis.

The protein belongs to the MnmA/TRMU family.

The protein resides in the cytoplasm. It carries out the reaction S-sulfanyl-L-cysteinyl-[protein] + uridine(34) in tRNA + AH2 + ATP = 2-thiouridine(34) in tRNA + L-cysteinyl-[protein] + A + AMP + diphosphate + H(+). In terms of biological role, catalyzes the 2-thiolation of uridine at the wobble position (U34) of tRNA, leading to the formation of s(2)U34. This chain is tRNA-specific 2-thiouridylase MnmA, found in Corynebacterium kroppenstedtii (strain DSM 44385 / JCM 11950 / CIP 105744 / CCUG 35717).